The following is a 555-amino-acid chain: Protein NRT1/ PTR FAMILY 5.4 (555 aa).

The next 2 membrane-spanning stretches (helical) occupy residues 18 to 38 and 62 to 82; these read AALF…GLAS and WIGV…SILG. The residue at position 86 (threonine 86) is a Phosphothreonine. 10 helical membrane passes run 87-107, 116-136, 159-179, 187-207, 311-331, 348-368, 392-412, 435-455, 470-490, and 516-536; these read VLLT…SVTV, VFFM…PCVM, NYWY…LIFI, LGFS…LIGI, IPIW…NTFF, IPPA…IPLY, IGVG…VEAK, LWLL…IVGM, IGAA…TGII, and YYYW…LFIA.

This sequence belongs to the major facilitator superfamily. Proton-dependent oligopeptide transporter (POT/PTR) (TC 2.A.17) family. In terms of tissue distribution, expressed in roots and flowers.

The protein localises to the membrane. This is Protein NRT1/ PTR FAMILY 5.4 (NPF5.4) from Arabidopsis thaliana (Mouse-ear cress).